Reading from the N-terminus, the 725-residue chain is Exocyst complex component 8 (725 aa).

Serine 19 carries the post-translational modification Phosphoserine. Residues 137–159 are disordered; it reads AGFFSTPGGASRDGSGPGEEGKQ. Threonine 142 carries the phosphothreonine modification. One can recognise a PH domain in the interval 182–282; that stretch reads YLVYNGDLVE…WLEVLEDTKR (101 aa). Positions 285–328 are disordered; that stretch reads SEKRRREQEEAAAPRGPPQVTSKATNPFEDDEEEEPAVPEVEEE. Acidic residues predominate over residues 312-328; the sequence is FEDDEEEEPAVPEVEEE.

This sequence belongs to the EXO84 family. The exocyst complex is composed of EXOC1, EXOC2, EXOC3, EXOC4, EXOC5, EXOC6, EXOC7 and EXOC8. Interacts (via PH domain) with GTP-bound RALA and RALB. Interacts with SH3BP1; required for the localization of both SH3BP1 and the exocyst to the leading edge of migrating cells.

The protein localises to the cytoplasm. The protein resides in the perinuclear region. Its subcellular location is the cell projection. It is found in the growth cone. In terms of biological role, component of the exocyst complex involved in the docking of exocytic vesicles with fusion sites on the plasma membrane. The sequence is that of Exocyst complex component 8 (EXOC8) from Homo sapiens (Human).